A 508-amino-acid polypeptide reads, in one-letter code: tRNA (guanine(37)-N(1))-methyltransferase (508 aa).

Residues 1–53 (MKFNFWKGLWKPKSLTPTLSHRLYRRMYTPQPPLNREMTVLDRSKFTVSLNLA) constitute a mitochondrion transit peptide. Histidine 253 contributes to the S-adenosyl-L-methionine binding site. Residues 267–284 (RERKQQERAKRENHEKST) are compositionally biased toward basic and acidic residues. Residues 267–291 (RERKQQERAKRENHEKSTETAVEPD) are disordered. Residues 323–324 (DL), 351–352 (DG), and asparagine 402 contribute to the S-adenosyl-L-methionine site.

The protein belongs to the class I-like SAM-binding methyltransferase superfamily. TRM5/TYW2 family. Monomer.

The protein resides in the mitochondrion matrix. The protein localises to the nucleus. It is found in the cytoplasm. It carries out the reaction guanosine(37) in tRNA + S-adenosyl-L-methionine = N(1)-methylguanosine(37) in tRNA + S-adenosyl-L-homocysteine + H(+). Specifically methylates the N1 position of guanosine-37 in various cytoplasmic and mitochondrial tRNAs. Methylation is not dependent on the nature of the nucleoside 5' of the target nucleoside. This is the first step in the biosynthesis of wybutosine (yW), a modified base adjacent to the anticodon of tRNAs and required for accurate decoding. The chain is tRNA (guanine(37)-N(1))-methyltransferase from Yarrowia lipolytica (strain CLIB 122 / E 150) (Yeast).